The primary structure comprises 430 residues: Serine--tRNA ligase (430 aa).

A disordered region spans residues 44–65 (TESLQAERNSRSKSIGAAKARG). 237-239 (TAE) provides a ligand contact to L-serine. 268 to 270 (RSE) provides a ligand contact to ATP. L-serine is bound at residue glutamate 291. 355-358 (EISS) is a binding site for ATP. Serine 391 is a binding site for L-serine.

The protein belongs to the class-II aminoacyl-tRNA synthetase family. Type-1 seryl-tRNA synthetase subfamily. Homodimer. The tRNA molecule binds across the dimer.

It is found in the cytoplasm. The catalysed reaction is tRNA(Ser) + L-serine + ATP = L-seryl-tRNA(Ser) + AMP + diphosphate + H(+). It carries out the reaction tRNA(Sec) + L-serine + ATP = L-seryl-tRNA(Sec) + AMP + diphosphate + H(+). The protein operates within aminoacyl-tRNA biosynthesis; selenocysteinyl-tRNA(Sec) biosynthesis; L-seryl-tRNA(Sec) from L-serine and tRNA(Sec): step 1/1. Catalyzes the attachment of serine to tRNA(Ser). Is also able to aminoacylate tRNA(Sec) with serine, to form the misacylated tRNA L-seryl-tRNA(Sec), which will be further converted into selenocysteinyl-tRNA(Sec). This is Serine--tRNA ligase from Edwardsiella ictaluri (strain 93-146).